The sequence spans 245 residues: Flavin-dependent thymidylate synthase (245 aa).

The 206-residue stretch at Ile-5 to Lys-210 folds into the ThyX domain. Residues Ser-59, Arg-83–Arg-85, and Gln-91 each bind FAD. DUMP is bound by residues Gln-80–Arg-83, Gln-91–Arg-95, and Arg-149. Residues Arg-83–Ser-93 carry the ThyX motif motif. FAD is bound by residues Asn-165 to Arg-167 and His-171. Arg-176 is a dUMP binding site. Arg-176 acts as the Involved in ionization of N3 of dUMP, leading to its activation in catalysis.

The protein belongs to the thymidylate synthase ThyX family. As to quaternary structure, homotetramer. FAD serves as cofactor.

The enzyme catalyses dUMP + (6R)-5,10-methylene-5,6,7,8-tetrahydrofolate + NADPH + H(+) = dTMP + (6S)-5,6,7,8-tetrahydrofolate + NADP(+). Its pathway is pyrimidine metabolism; dTTP biosynthesis. In terms of biological role, catalyzes the reductive methylation of 2'-deoxyuridine-5'-monophosphate (dUMP) to 2'-deoxythymidine-5'-monophosphate (dTMP) while utilizing 5,10-methylenetetrahydrofolate (mTHF) as the methyl donor, and NADPH and FADH(2) as the reductant. This is Flavin-dependent thymidylate synthase from Thermococcus onnurineus (strain NA1).